The primary structure comprises 115 residues: MATTILGVGPGVFIIAVIWMVTLMLTVLLCRASGKARFWTVVVFTLALITTLILVFFPRASQTPAPAKEMQIVDTFFIGRYFLISIMSVIFLGCLFFVFVYHILEPVYAKPIGIH.

The next 3 helical transmembrane spans lie at 5 to 25 (ILGV…TLML), 38 to 58 (FWTV…VFFP), and 81 to 101 (YFLI…VFVY).

This sequence belongs to the TMEM218 family.

It is found in the membrane. It localises to the cell projection. Its subcellular location is the cilium. May be involved in ciliary biogenesis or function. This Xenopus tropicalis (Western clawed frog) protein is Transmembrane protein 218 (tmem218).